A 249-amino-acid polypeptide reads, in one-letter code: MADS-box transcription factor 18 (249 aa).

Residues 1–61 (MGRGPVQLRR…GKLYEFSSHS (61 aa)) form the MADS-box domain. Residues 88 to 179 (QENWGDEYGI…KLMETEKEKN (92 aa)) form the K-box domain. Residues 184–249 (NTNREEQNGA…PPWMLRTSHT (66 aa)) form a disordered region. Residues 210-236 (PTTNNSQSQPRGSGESEAQPSPAQAGN) are compositionally biased toward polar residues.

As to expression, widely expressed. Transcripts accumulate to higher levels in organs that retain meristematic characteristics: in the apical meristem and in the meristematic leaf primordia formed on its flank; in the developing panicle at the early stage of rachis-branch primordia differentiation; in the procambium of the rachis branches and in all floral organ primordia.

The protein localises to the nucleus. Probable transcription factor. The sequence is that of MADS-box transcription factor 18 (MADS18) from Oryza sativa subsp. indica (Rice).